The following is a 961-amino-acid chain: Retinoblastoma-related protein 1 (961 aa).

Positions 404 to 606 are domain A; that stretch reads TPVSTAMTTA…EKGSSMYNSL (203 aa). A pocket region spans residues 404–819; sequence TPVSTAMTTA…NEMFIPSVKP (416 aa). A spacer region spans residues 607–728; sequence AVAKPSLAAE…PGGGGETCAE (122 aa). The tract at residues 729–819 is domain B; that stretch reads TAINVFFGKI…NEMFIPSVKP (91 aa). Residues 829 to 856 form a disordered region; sequence NAEKNNHNDGQGPASPKPSPFPKLPDMS.

Belongs to the retinoblastoma protein (RB) family.

Its subcellular location is the nucleus. Its function is as follows. Regulator of biological processes that recruits a histone deacetylase to control gene transcription. May play a role in the entry into mitosis, negatively regulating the cell proliferation. Formation of stable complexes with geminiviridae replication-associated proteins may create a cellular environment which favors viral DNA replication. The chain is Retinoblastoma-related protein 1 (RB1) from Nicotiana tabacum (Common tobacco).